Consider the following 295-residue polypeptide: 4-hydroxy-tetrahydrodipicolinate synthase (295 aa).

Threonine 46 provides a ligand contact to pyruvate. The active-site Proton donor/acceptor is tyrosine 134. Catalysis depends on lysine 162, which acts as the Schiff-base intermediate with substrate. Isoleucine 205 is a pyruvate binding site.

This sequence belongs to the DapA family. Homotetramer; dimer of dimers.

The protein resides in the cytoplasm. The enzyme catalyses L-aspartate 4-semialdehyde + pyruvate = (2S,4S)-4-hydroxy-2,3,4,5-tetrahydrodipicolinate + H2O + H(+). Its pathway is amino-acid biosynthesis; L-lysine biosynthesis via DAP pathway; (S)-tetrahydrodipicolinate from L-aspartate: step 3/4. Its function is as follows. Catalyzes the condensation of (S)-aspartate-beta-semialdehyde [(S)-ASA] and pyruvate to 4-hydroxy-tetrahydrodipicolinate (HTPA). This is 4-hydroxy-tetrahydrodipicolinate synthase from Anaeromyxobacter dehalogenans (strain 2CP-C).